Consider the following 320-residue polypeptide: Transcription factor bHLH34 (320 aa).

The bHLH domain maps to serine 162–leucine 213. The interval tryptophan 299 to alanine 320 is disordered. Basic and acidic residues predominate over residues alanine 305–lysine 314.

In terms of assembly, homodimer. Expressed constitutively in roots, leaves, stems, and flowers.

It localises to the nucleus. The sequence is that of Transcription factor bHLH34 (BHLH34) from Arabidopsis thaliana (Mouse-ear cress).